The sequence spans 264 residues: Phosphoribosylaminoimidazole-succinocarboxamide synthase 1 (264 aa).

This sequence belongs to the SAICAR synthetase family.

The catalysed reaction is 5-amino-1-(5-phospho-D-ribosyl)imidazole-4-carboxylate + L-aspartate + ATP = (2S)-2-[5-amino-1-(5-phospho-beta-D-ribosyl)imidazole-4-carboxamido]succinate + ADP + phosphate + 2 H(+). It functions in the pathway purine metabolism; IMP biosynthesis via de novo pathway; 5-amino-1-(5-phospho-D-ribosyl)imidazole-4-carboxamide from 5-amino-1-(5-phospho-D-ribosyl)imidazole-4-carboxylate: step 1/2. This is Phosphoribosylaminoimidazole-succinocarboxamide synthase 1 (purC1) from Mesorhizobium japonicum (strain LMG 29417 / CECT 9101 / MAFF 303099) (Mesorhizobium loti (strain MAFF 303099)).